Reading from the N-terminus, the 222-residue chain is 3-dehydroquinate dehydratase (222 aa).

Residues 29–31 (ELR) and arginine 55 contribute to the 3-dehydroquinate site. Histidine 112 (proton donor/acceptor) is an active-site residue. The active-site Schiff-base intermediate with substrate is the lysine 139. Positions 178, 199, and 203 each coordinate 3-dehydroquinate.

It belongs to the type-I 3-dehydroquinase family. Homodimer.

The catalysed reaction is 3-dehydroquinate = 3-dehydroshikimate + H2O. The protein operates within metabolic intermediate biosynthesis; chorismate biosynthesis; chorismate from D-erythrose 4-phosphate and phosphoenolpyruvate: step 3/7. In terms of biological role, involved in the third step of the chorismate pathway, which leads to the biosynthesis of aromatic amino acids. Catalyzes the cis-dehydration of 3-dehydroquinate (DHQ) and introduces the first double bond of the aromatic ring to yield 3-dehydroshikimate. The chain is 3-dehydroquinate dehydratase from Dehalococcoides mccartyi (strain ATCC BAA-2100 / JCM 16839 / KCTC 5957 / BAV1).